Here is a 428-residue protein sequence, read N- to C-terminus: Histidine--tRNA ligase (428 aa).

The protein belongs to the class-II aminoacyl-tRNA synthetase family. In terms of assembly, homodimer.

The protein localises to the cytoplasm. It catalyses the reaction tRNA(His) + L-histidine + ATP = L-histidyl-tRNA(His) + AMP + diphosphate + H(+). The sequence is that of Histidine--tRNA ligase from Ectopseudomonas mendocina (strain ymp) (Pseudomonas mendocina).